The following is a 302-amino-acid chain: MAVAHEMEMESVNLNMEREGKEEPEEEKMKGNGEGKDFPRSRKVHRIVSKWMLPEPVRRTYLERANCLPPPLFIILISLAELAVFIYYAVWKPQKQWITLDTGILESPLTYCPEKREEAWRFISYMLVHAGVQHIVGNLLMQIVLGIPLEMVHKGLRVGLVYLAGVLAGSLASSIFDPLKSLVGASGGVYALMGGYFMNVIVNFREMIPAFGIVRLLVIILIVASDMGFALYRRFFVPANGSPVSFAAHIAGGFAGMSIGYTVFSCFDKTLLKDPRFWIAIAAYVACLLFAVFFNIFLSPAN.

Residues Met-1–Phe-38 are disordered. Over residues Met-16–Phe-38 the composition is skewed to basic and acidic residues. Transmembrane regions (helical) follow at residues Pro-71 to Trp-91, Leu-127 to Ile-147, Val-158 to Pro-178, Leu-182 to Val-202, Phe-211 to Leu-231, Val-244 to Phe-264, and Phe-277 to Phe-297. The Nucleophile role is filled by Ser-186. His-249 is an active-site residue.

The protein belongs to the peptidase S54 family. Post-translationally, proteolytic processing of the proenzyme produces an N- and a C-terminal fragment. The processing is required for activation of the protease.

The protein resides in the cell membrane. It catalyses the reaction Cleaves type-1 transmembrane domains using a catalytic dyad composed of serine and histidine that are contributed by different transmembrane domains.. Functionally, involved in regulated intramembrane proteolysis and the subsequent release of functional polypeptides from their membrane anchors. Known substrate: EFNB3. This Mus musculus (Mouse) protein is Rhomboid-related protein 2 (Rhbdl2).